Consider the following 227-residue polypeptide: Tegument protein ORF55 (227 aa).

The S-palmitoyl cysteine; by host moiety is linked to residue cysteine 11. The segment at 183-227 (VTRQPEATLPKPPTEDPSVSAMHSSIPPRPSSTLEETTESAIGST) is disordered. The span at 213-227 (SSTLEETTESAIGST) shows a compositional bias: polar residues.

It belongs to the herpesviridae UL51 family. In terms of assembly, oligomerizes. Interacts with ORF42; this interaction mediates ORF42 incorporation to virions. Interacts with vBCL2. In terms of processing, phosphorylated. Post-translationally, palmitoylation is necessary for Golgi localization.

The protein localises to the virion tegument. It is found in the host cytoplasm. It localises to the host Golgi apparatus. Its function is as follows. Plays several roles during the time course of infection, including egress of virus particles from the perinuclear space and secondary envelopment of cytoplasmic capsids that bud into specific trans-Golgi network (TGN)-derived membranes. This chain is Tegument protein ORF55 (ORF55), found in Homo sapiens (Human).